The following is a 153-amino-acid chain: NADH dehydrogenase [ubiquinone] 1 beta subcomplex subunit 11, mitochondrial (153 aa).

The N-terminal 29 residues, 1–29 (MAAGLFGLSARLLLAAAATRGLPAARVRW), are a transit peptide targeting the mitochondrion. The tract at residues 40–77 (PSAVAGKRPPEPTTQWQEDPEPEDENLYEKNPDSHGYD) is disordered. The segment covering 66-77 (LYEKNPDSHGYD) has biased composition (basic and acidic residues). A helical membrane pass occupies residues 89–109 (LVFFFGVSIILVLGSTFVAYL).

The protein belongs to the complex I NDUFB11 subunit family. Complex I is composed of 45 different subunits. Interacts with BCAP31.

The protein localises to the mitochondrion inner membrane. Accessory subunit of the mitochondrial membrane respiratory chain NADH dehydrogenase (Complex I), that is believed not to be involved in catalysis. Complex I functions in the transfer of electrons from NADH to the respiratory chain. The immediate electron acceptor for the enzyme is believed to be ubiquinone. This Pan troglodytes (Chimpanzee) protein is NADH dehydrogenase [ubiquinone] 1 beta subcomplex subunit 11, mitochondrial (NDUFB11).